Reading from the N-terminus, the 291-residue chain is ATP synthase gamma chain (291 aa).

Belongs to the ATPase gamma chain family. F-type ATPases have 2 components, CF(1) - the catalytic core - and CF(0) - the membrane proton channel. CF(1) has five subunits: alpha(3), beta(3), gamma(1), delta(1), epsilon(1). CF(0) has three main subunits: a, b and c.

The protein localises to the cell membrane. Its function is as follows. Produces ATP from ADP in the presence of a proton gradient across the membrane. The gamma chain is believed to be important in regulating ATPase activity and the flow of protons through the CF(0) complex. The sequence is that of ATP synthase gamma chain from Buchnera aphidicola subsp. Schizaphis graminum (strain Sg).